A 198-amino-acid chain; its full sequence is tRNA(Phe) 7-((3-amino-3-carboxypropyl)-4-demethylwyosine(37)-N(4))-methyltransferase 1 (198 aa).

Belongs to the TYW3 family.

It carries out the reaction 4-demethyl-7-[(3S)-3-amino-3-carboxypropyl]wyosine(37) in tRNA(Phe) + S-adenosyl-L-methionine = 7-[(3S)-3-amino-3-carboxypropyl]wyosine(37) in tRNA(Phe) + S-adenosyl-L-homocysteine + H(+). Its function is as follows. S-adenosyl-L-methionine-dependent methyltransferase that acts as a component of the wyosine derivatives biosynthesis pathway. Probably methylates N-4 position of wybutosine-86 to produce wybutosine-72. The sequence is that of tRNA(Phe) 7-((3-amino-3-carboxypropyl)-4-demethylwyosine(37)-N(4))-methyltransferase 1 from Thermococcus kodakarensis (strain ATCC BAA-918 / JCM 12380 / KOD1) (Pyrococcus kodakaraensis (strain KOD1)).